A 612-amino-acid chain; its full sequence is Threonine--tRNA ligase (612 aa).

Residues Asp218 to Pro509 form a catalytic region. 3 residues coordinate Zn(2+): Cys310, His361, and His486.

The protein belongs to the class-II aminoacyl-tRNA synthetase family. As to quaternary structure, homodimer. It depends on Zn(2+) as a cofactor.

Its subcellular location is the cytoplasm. The catalysed reaction is tRNA(Thr) + L-threonine + ATP = L-threonyl-tRNA(Thr) + AMP + diphosphate + H(+). Functionally, catalyzes the attachment of threonine to tRNA(Thr) in a two-step reaction: L-threonine is first activated by ATP to form Thr-AMP and then transferred to the acceptor end of tRNA(Thr). Also edits incorrectly charged L-seryl-tRNA(Thr). This Helicobacter pylori (strain G27) protein is Threonine--tRNA ligase.